A 199-amino-acid chain; its full sequence is NAD(P)H dehydrogenase (quinone) (199 aa).

Residues 4 to 190 (VLVLYYSAYG…AGARYQGRMI (187 aa)) form the Flavodoxin-like domain. FMN is bound by residues 10–15 (SAYGHI) and 78–80 (TRF). An NAD(+)-binding site is contributed by Y12. Residue W98 participates in substrate binding. FMN contacts are provided by residues 113–119 (SSATQHG) and H134.

The protein belongs to the WrbA family. The cofactor is FMN.

It carries out the reaction a quinone + NADH + H(+) = a quinol + NAD(+). It catalyses the reaction a quinone + NADPH + H(+) = a quinol + NADP(+). This chain is NAD(P)H dehydrogenase (quinone), found in Nitrobacter winogradskyi (strain ATCC 25391 / DSM 10237 / CIP 104748 / NCIMB 11846 / Nb-255).